The primary structure comprises 67 residues: Major cold shock protein (67 aa).

In terms of domain architecture, CSD spans 4-63 (GTVKWFNAEKGFGFISTENGQDVFAHFSAIQTNGFKTLEEGQKVAFDVEEGQRGPQAVNI).

In terms of assembly, homodimer.

The protein localises to the cytoplasm. This chain is Major cold shock protein (cspA), found in Streptococcus pyogenes serotype M3 (strain ATCC BAA-595 / MGAS315).